A 231-amino-acid chain; its full sequence is Superoxide dismutase [Mn], mitochondrial (231 aa).

The N-terminal 27 residues, 1-27 (MALRTLASRKTLAAAALPLAAAAAARG), are a transit peptide targeting the mitochondrion. Mn(2+) is bound by residues His55, His103, Asp192, and His196.

Belongs to the iron/manganese superoxide dismutase family. Homotetramer. Requires Mn(2+) as cofactor.

It is found in the mitochondrion matrix. The catalysed reaction is 2 superoxide + 2 H(+) = H2O2 + O2. Destroys superoxide anion radicals which are normally produced within the cells and which are toxic to biological systems. The sequence is that of Superoxide dismutase [Mn], mitochondrial (SODA) from Oryza sativa subsp. japonica (Rice).